Consider the following 261-residue polypeptide: MSRIRQAFAALDGGKALIPYITVGDPDIRTTLALMHGMVANGADILELGVPFSDPMADGPVIQRAAERALANGISLRDVLDVVRKFRETDTQTPVVLMGYLNPVHKMGYREFAQEAAKAGVDGVLTVDSPVETIDPLYRELKDNGVDCIFLIAPTTTEDRIKTIAELAGGFVYYVSLKGVTGAASLDTDEVSRKIEYLHQYIDIPIGVGFGISNAESARKIGRVAEAVIVGSRIVKEIENNAGNEAAVVGALVKELKDAVR.

Catalysis depends on proton acceptor residues Glu47 and Asp58.

The protein belongs to the TrpA family. Tetramer of two alpha and two beta chains.

It catalyses the reaction (1S,2R)-1-C-(indol-3-yl)glycerol 3-phosphate + L-serine = D-glyceraldehyde 3-phosphate + L-tryptophan + H2O. The protein operates within amino-acid biosynthesis; L-tryptophan biosynthesis; L-tryptophan from chorismate: step 5/5. Its function is as follows. The alpha subunit is responsible for the aldol cleavage of indoleglycerol phosphate to indole and glyceraldehyde 3-phosphate. The chain is Tryptophan synthase alpha chain from Neisseria meningitidis serogroup A / serotype 4A (strain DSM 15465 / Z2491).